The primary structure comprises 160 residues: Glyoxalase domain-containing protein 5 (160 aa).

The VOC domain maps to 33–153 (RLDHLVLTVR…DQNLIEVSNY (121 aa)).

Belongs to the glyoxalase I family.

The sequence is that of Glyoxalase domain-containing protein 5 (glod5) from Xenopus tropicalis (Western clawed frog).